A 204-amino-acid polypeptide reads, in one-letter code: Prephenate decarboxylase (204 aa).

The protein belongs to the prephenate decarboxylase family.

The protein localises to the cytoplasm. It catalyses the reaction prephenate + H(+) = 3-[(4R)-4-hydroxycyclohexa-1,5-dien-1-yl]-2-oxopropanoate + CO2. The protein operates within antibiotic biosynthesis; bacilysin biosynthesis. Functionally, part of the bacABCDEF operon responsible for the biosynthesis of the nonribosomally synthesized dipeptide antibiotic bacilysin, composed of L-alanine and L-anticapsin. Bacilysin is an irreversible inactivator of the glutaminase domain of glucosamine synthetase. BacA is an unusual prephenate decarboxylase that avoids the typical aromatization of the cyclohexadienol ring of prephenate. BacA catalyzes the protonation of prephenate (1-carboxy-4-hydroxy-alpha-oxo-2,5-cyclohexadiene-1-propanoic acid) at C6 position, followed by a decarboxylation to produce the endocyclic-delta(4),delta(8)-7R-dihydro-hydroxyphenylpyruvate (en-H2HPP). En-H2HPP is able to undergo a slow nonenzymatic isomerization to produce the exocyclic-delta(3),delta(5)-dihydro-hydroxyphenylpyruvate (ex-H2HPP). BacA isomerizes only the pro-R double bond in prephenate. In Bacillus subtilis, this protein is Prephenate decarboxylase.